The sequence spans 438 residues: C4-dicarboxylate transport protein 1 (438 aa).

8 helical membrane passes run 20 to 42 (LYVQ…PSVA), 57 to 77 (LIKM…IAHI), 90 to 112 (ALFY…GNLV), 160 to 179 (VLQV…ALGK), 192 to 214 (AHAV…FGAM), 229 to 251 (LIGL…LGLI), 324 to 346 (LFIA…LLVA), and 361 to 383 (FITL…AIVF).

This sequence belongs to the dicarboxylate/amino acid:cation symporter (DAACS) (TC 2.A.23) family.

It localises to the cell inner membrane. Its function is as follows. Responsible for the transport of dicarboxylates such as succinate, fumarate, and malate from the periplasm across the membrane. This chain is C4-dicarboxylate transport protein 1, found in Bradyrhizobium diazoefficiens (strain JCM 10833 / BCRC 13528 / IAM 13628 / NBRC 14792 / USDA 110).